A 58-amino-acid polypeptide reads, in one-letter code: Histatherin (58 aa).

The signal sequence occupies residues 1 to 19 (MKIFIFIFIMALILAMIRA).

It belongs to the histatin/statherin family. As to expression, expressed in mammary glands.

It localises to the secreted. This is Histatherin from Bos taurus (Bovine).